The chain runs to 32 residues: MSDIN-like toxin proprotein 1 (32 aa).

The propeptide occupies 1-10; sequence MSDINVTRLP. Positions 11–18 form a cross-link, cyclopeptide (Gly-Pro); it reads GFVPILFP. Positions 19 to 32 are excised as a propeptide; sequence CVGDDVNTALTRGE.

It belongs to the MSDIN fungal toxin family. Processed by the macrocyclase-peptidase enzyme POPB to yield a toxic cyclic octapeptide. POPB first removes 10 residues from the N-terminus. Conformational trapping of the remaining peptide forces the enzyme to release this intermediate rather than proceed to macrocyclization. The enzyme rebinds the remaining peptide in a different conformation and catalyzes macrocyclization of the N-terminal 8 residues.

Probable toxin that belongs to the MSDIN-like toxin family responsible for a large number of food poisoning cases and deaths. The chain is MSDIN-like toxin proprotein 1 from Amanita bisporigera (Destroying angel).